We begin with the raw amino-acid sequence, 159 residues long: Protein SPA, chloroplastic (159 aa).

A chloroplast-targeting transit peptide spans 1-47; that stretch reads MLTAPSLSRFKSPFISSPLKLPTLSSSFFTQKFHQTCRRRNSYPCIK. The helical transmembrane segment at 56 to 76 threads the bilayer; the sequence is VIAITVGVLSVAIGVGIPVFY. Residues 85–145 are CR-type-like; sequence KRENTQPCFP…TCTTCQGSGI (61 aa). CXXCXGXG motif repeat units lie at residues 92 to 99, 103 to 110, 126 to 133, and 137 to 144; these read CFPCTGTG, CRFCMGTG, CINCDGAG, and CTTCQGSG.

Expressed in source leaves. Lower levels of expression in fruits and stems.

The protein localises to the plastid. It localises to the chloroplast thylakoid membrane. Its function is as follows. Participates in determining harvest index (HI) by affecting source-sink carbon distribution. Up-regulates the conversion of fixed carbon to exportable sugars. The polypeptide is Protein SPA, chloroplastic (Solanum lycopersicum (Tomato)).